The sequence spans 136 residues: Large ribosomal subunit protein uL16c (136 aa).

Belongs to the universal ribosomal protein uL16 family. As to quaternary structure, part of the 50S ribosomal subunit.

It localises to the plastid. The protein localises to the chloroplast. This Guizotia abyssinica (Niger) protein is Large ribosomal subunit protein uL16c.